The chain runs to 197 residues: Peptide deformylase (197 aa).

Positions 106 and 148 each coordinate Fe cation. Glu-149 is an active-site residue. His-152 provides a ligand contact to Fe cation.

It belongs to the polypeptide deformylase family. Requires Fe(2+) as cofactor.

The enzyme catalyses N-terminal N-formyl-L-methionyl-[peptide] + H2O = N-terminal L-methionyl-[peptide] + formate. Functionally, removes the formyl group from the N-terminal Met of newly synthesized proteins. Requires at least a dipeptide for an efficient rate of reaction. N-terminal L-methionine is a prerequisite for activity but the enzyme has broad specificity at other positions. The polypeptide is Peptide deformylase (Mycolicibacterium paratuberculosis (strain ATCC BAA-968 / K-10) (Mycobacterium paratuberculosis)).